Here is a 542-residue protein sequence, read N- to C-terminus: Sodium/hydrogen exchanger 8 (542 aa).

Transmembrane regions (helical) follow at residues 55–75 (EQSSGMTIFFSLLVLAICIIL), 79–99 (LIRYRLHFLPESVAVVSLGIL), 118–138 (EEMFRPNMFFLLLLPPIIFES), 151–171 (IGSITLFAVFGTAISAFVVGG), 186–206 (NMTDSFAFGSLISAVDPVATI), 256–276 (TFLQALDYFLKMFFGSAALGT), 306–326 (AYLPYGLAEGISLSETCVFAF), 349–369 (LVLFGRAVNIFPLSYLLNFFR), 374–394 (TPKMMFIMWFSGLRGAIPYAL), 412–432 (TTIVIVLFTILLLGGSTMPLI), and 446–466 (NKKDVNLSKTEKMGNTVESEH). The residue at position 471 (threonine 471) is a Phosphothreonine. Phosphoserine is present on residues serine 532 and serine 534.

The protein belongs to the monovalent cation:proton antiporter 1 (CPA1) transporter (TC 2.A.36) family.

It localises to the golgi apparatus membrane. Its subcellular location is the golgi apparatus. It is found in the trans-Golgi network membrane. The protein localises to the endosome. The protein resides in the multivesicular body membrane. It localises to the apical cell membrane. Its subcellular location is the cytoplasmic vesicle. It is found in the secretory vesicle. The protein localises to the acrosome. The enzyme catalyses Na(+)(in) + H(+)(out) = Na(+)(out) + H(+)(in). Its function is as follows. Na(+)/H(+) antiporter. Mediates the electoneutral exchange of intracellular H(+) ions for extracellular Na(+) in 1:1 stoichiometry. Acts as an Na(+)/H(+) exchanger in the trans-Golgi. Contributes to the regulation of pH regulation of Golgi apparatus, and consequently, in protein trafficking and endosomal morphology. In germ cells, plays a crucial role in acrosome biogenesis and sperm development, probably by playing a role in the fusion of the Golgi-derived vesicles that form the acrosomal cap. Can also be active at the cell surface of specialized cells. In the small intestine, at the cell membrane, plays a major physiological role in transepithelial absorption of Na(+) and regulates intracellular pH homeostasis of intestinal epithelial cells. Acts as an important regulator of mucosal integrity in the intestine and in the stomach, could mediate the pH fluctuation necessary for mucin exocytosis or assist membrane trafficking of other proteins. Plays a role in photoreceptor survival and in the maintenance of intracellular pH homeostasis in retinal pigment epithelium (RPE cells). The protein is Sodium/hydrogen exchanger 8 (SLC9A8) of Macaca fascicularis (Crab-eating macaque).